Consider the following 181-residue polypeptide: Oligoribonuclease (181 aa).

The region spanning 8-171 (LIWIDLEMTG…QDIQESIAEL (164 aa)) is the Exonuclease domain. The active site involves Y129.

Belongs to the oligoribonuclease family.

The protein resides in the cytoplasm. 3'-to-5' exoribonuclease specific for small oligoribonucleotides. This Shewanella baltica (strain OS155 / ATCC BAA-1091) protein is Oligoribonuclease.